A 313-amino-acid chain; its full sequence is Cytochrome f (313 aa).

A signal peptide spans 1–31 (MQNMFSFLSNKKIIALFLIIGTIFMPLSSEA). Heme-binding residues include Y32, C52, C55, and H56. A helical transmembrane segment spans residues 279 to 298 (IKWLIAFLILSTLGQVFLVL).

It belongs to the cytochrome f family. The 4 large subunits of the cytochrome b6-f complex are cytochrome b6, subunit IV (17 kDa polypeptide, petD), cytochrome f and the Rieske protein, while the 4 small subunits are PetG, PetL, PetM and PetN. The complex functions as a dimer. Heme serves as cofactor.

It localises to the plastid. The protein resides in the chloroplast thylakoid membrane. In terms of biological role, component of the cytochrome b6-f complex, which mediates electron transfer between photosystem II (PSII) and photosystem I (PSI), cyclic electron flow around PSI, and state transitions. The chain is Cytochrome f (petA) from Mesostigma viride (Green alga).